Consider the following 729-residue polypeptide: Cytoplasmic polyadenylation element-binding protein 4 (729 aa).

Disordered stretches follow at residues 20–50 (FPVR…NNTA) and 78–133 (EKAK…KEKL). A compositionally biased stretch (basic residues) spans 24-35 (FHPHLQPPHHHQ). Low complexity predominate over residues 83–96 (QQQEQQDPLEKQQL). Phosphoserine occurs at positions 97, 99, and 137. Residues 218 to 324 (FGGSFSPQIG…RDHRRGLNGG (107 aa)) are disordered. Residues 232–249 (HHPHHPHFQHHHSQHQQQ) show a composition bias toward basic residues. Phosphoserine occurs at positions 252 and 255. Positions 285–300 (WSSYQSPSPTPSSSWS) are enriched in low complexity. A compositionally biased stretch (gly residues) spans 301–311 (PGGGGYGGWGA). Thr-326 bears the Phosphothreonine mark. Residues Ser-330 and Ser-332 each carry the phosphoserine modification. RRM domains are found at residues 472-563 (RKVF…PWNL) and 580-662 (KTIF…PYVL). Positions 541 to 543 (KLY) are RNA-binding. Residues Cys-667, Cys-675, Cys-684, Cys-689, Cys-694, Cys-697, His-702, and His-710 each contribute to the Zn(2+) site.

Belongs to the RRM CPEB family. In terms of assembly, interacts with TOB1. Highly expressed in brain, including hippocampus, amygdala, granule and Purkinje cells of the cerebellum (at protein level). Expressed in spinal cord (at protein level). Expressed in kidney, lung and heart (at protein level). Expressed in liver (at protein level). Expressed in spleen and testis (at protein level). Weakly expressed in ovary and in granular cells of dentate gyrus and the pyramidal cells of CA3 and CA1 of the hippocampus.

It localises to the cytoplasm. The protein localises to the cell projection. The protein resides in the dendrite. It is found in the dendritic spine. Its subcellular location is the postsynaptic density. It localises to the axon. The protein localises to the growth cone. The protein resides in the endoplasmic reticulum. It is found in the perinuclear region. In terms of biological role, sequence-specific RNA-binding protein that binds to the cytoplasmic polyadenylation element (CPE), an uridine-rich sequence element (consensus sequence 5'-UUUUUAU-3') within the mRNA 3'-UTR. RNA binding results in a clear conformational change analogous to the Venus fly trap mechanism. Regulates activation of unfolded protein response (UPR) in the process of adaptation to ER stress in liver, by maintaining translation of CPE-regulated mRNAs in conditions in which global protein synthesis is inhibited. Required for cell cycle progression, specifically for cytokinesis and chromosomal segregation. Plays a role as an oncogene promoting tumor growth and progression by positively regulating translation of t-plasminogen activator/PLAT. Stimulates proliferation of melanocytes. In contrast to CPEB1 and CPEB3, does not play role in synaptic plasticity, learning and memory. The protein is Cytoplasmic polyadenylation element-binding protein 4 (Cpeb4) of Mus musculus (Mouse).